The chain runs to 1246 residues: Stromal processing peptidase, chloroplastic (1246 aa).

Residues 1–136 (MASFPSPPLA…AKIRRRHVLH (136 aa)) constitute a chloroplast transit peptide. His-228 is a Zn(2+) binding site. The Proton acceptor role is filled by Glu-231. His-232 is a binding site for Zn(2+). The active site involves Glu-302. A Zn(2+)-binding site is contributed by Glu-309.

It belongs to the peptidase M16 family. It depends on Zn(2+) as a cofactor. In terms of tissue distribution, widely expressed.

Its subcellular location is the plastid. It localises to the chloroplast stroma. Functionally, cleaves presequences (transit peptides) from chloroplastic protein precursors. Initially recognizes a precursor by binding to the C-terminus of its transit peptide and then removes the transit peptide in a single endoproteolytic step. In a next step, pursues the cleavage of transit peptide to a subfragment form. The protein is Stromal processing peptidase, chloroplastic of Oryza sativa subsp. indica (Rice).